A 372-amino-acid polypeptide reads, in one-letter code: Spermidine/putrescine import ATP-binding protein PotA (372 aa).

The region spanning 12 to 242 (IQLKGLNKSF…PTNLFVARFI (231 aa)) is the ABC transporter domain. 44–51 (GPSGCGKT) is an ATP binding site.

Belongs to the ABC transporter superfamily. Spermidine/putrescine importer (TC 3.A.1.11.1) family. As to quaternary structure, the complex is composed of two ATP-binding proteins (PotA), two transmembrane proteins (PotB and PotC) and a solute-binding protein (PotD).

The protein resides in the cell inner membrane. The enzyme catalyses ATP + H2O + polyamine-[polyamine-binding protein]Side 1 = ADP + phosphate + polyamineSide 2 + [polyamine-binding protein]Side 1.. In terms of biological role, part of the ABC transporter complex PotABCD involved in spermidine/putrescine import. Responsible for energy coupling to the transport system. The polypeptide is Spermidine/putrescine import ATP-binding protein PotA (Photobacterium profundum (strain SS9)).